A 391-amino-acid polypeptide reads, in one-letter code: MTQSISRPLQYAYIAAFGGLLLGLAGWSLKSVPGFSAAADTPLLNGKLAHAFEAHYDKEFPIKRLGTNLWAALDYTLFHEGRPGVVIGKDGWLFTDEEFKPAPSGQQLEDNWALVRGVQRELNRRGVKLVLAVIPAKARLYPEHIGREQPAALHDSLYQDFLARARAAGIDSPDLLGSLRQAKDNGAVFLRTDTHWSPLGAETVAQRLGAEIRETHLLDVPAQNFVTRVGEERTHKGDLLSFLPLDPLFDELLPRPEQLQQRTTEAAPALPGGQQSGAGDDLFGDSQQPRLALVGTSYSANPRWNFEGALKQALSADLINYAKEGKGPLEPMLELLQDEGFRKDPPQLLVWEFPERYLPMASDLSQFDADWVAQLKASGGRDERLAASRND.

The first 39 residues, 1–39 (MTQSISRPLQYAYIAAFGGLLLGLAGWSLKSVPGFSAAA), serve as a signal peptide directing secretion. Residue aspartate 193 is part of the active site. The active-site Proton acceptor is histidine 195. Positions 259-286 (LQQRTTEAAPALPGGQQSGAGDDLFGDS) are disordered. Serine 297 acts as the Nucleophile in catalysis.

It belongs to the AlgJ family.

Its subcellular location is the cell inner membrane. It localises to the periplasm. It functions in the pathway glycan biosynthesis; alginate biosynthesis. Its function is as follows. Together with AlgI and AlgF, forms an inner membrane complex which probably interacts with the alginate polymerization-transport complex and adds acetyl groups at the O-2 and O-3 positions of mannuronate residues. Acetylation of alginate is important for the architecture of biofilms and increases resistance to opsonic killing in the host. In Pseudomonas aeruginosa (strain ATCC 15692 / DSM 22644 / CIP 104116 / JCM 14847 / LMG 12228 / 1C / PRS 101 / PAO1), this protein is Probable alginate O-acetylase AlgJ (algJ).